A 143-amino-acid chain; its full sequence is MAYNKEEKIKSLNRMQYEVTQNNGTEPPFQNEYWDHKEEGLYVDIVSGKPLFTSKDKFDSQCGWPSFTKPIEEEVEEKLDTSHGMIRTEVRSRTADSHLGHVFNDGPGPNGLRYCINSAALRFVPKHKLKEEGYESYLHLFNK.

The 122-residue stretch at 5-126 (KEEKIKSLNR…NSAALRFVPK (122 aa)) folds into the MsrB domain. Cys115 functions as the Nucleophile in the catalytic mechanism.

Belongs to the MsrB Met sulfoxide reductase family.

It catalyses the reaction L-methionyl-[protein] + [thioredoxin]-disulfide + H2O = L-methionyl-(R)-S-oxide-[protein] + [thioredoxin]-dithiol. This is Peptide methionine sulfoxide reductase MsrB from Bacillus subtilis (strain 168).